The following is a 604-amino-acid chain: ATP-dependent RNA helicase DED1 (604 aa).

A compositionally biased stretch (polar residues) spans 1–19 (MAELSEQVQNLSINDNNEN). Residues 1 to 55 (MAELSEQVQNLSINDNNENGYVPPHLRGKPRSARNNSSNYNNNNGGYNGGRGGGS) are disordered. Alanine 2 carries the N-acetylalanine modification. Residues 34–45 (RNNSSNYNNNNG) show a composition bias toward low complexity. The span at 46 to 55 (GYNGGRGGGS) shows a compositional bias: gly residues. Arginine 51 is modified (omega-N-methylarginine). Position 62 is a dimethylated arginine; alternate (arginine 62). Arginine 62 is subject to Omega-N-methylarginine; alternate. Residues 67–76 (NGGFFGGNNG) show a composition bias toward gly residues. The segment at 67 to 94 (NGGFFGGNNGGSRSNGRSGGRWIDGKHV) is disordered. The Q motif signature appears at 142 to 170 (TEFTSPPLDGLLLENIKLARFTKPTPVQK). Lysine 158 participates in a covalent cross-link: Glycyl lysine isopeptide (Lys-Gly) (interchain with G-Cter in ubiquitin). Positions 173–362 (VPIVANGRDL…RDFLSDYIFL (190 aa)) constitute a Helicase ATP-binding domain. 186 to 193 (AQTGSGKT) is an ATP binding site. Phosphoserine occurs at positions 215, 218, and 263. The DEAD box signature appears at 306-309 (DEAD). Positions 373-533 (NITQKVLYVE…EVPSFLKDAM (161 aa)) constitute a Helicase C-terminal domain. The disordered stretch occupies residues 533–604 (MMSAPGSRSN…SGGSNNSSWW (72 aa)). Phosphoserine occurs at positions 535, 539, and 543. Arginine 545 carries the post-translational modification Dimethylated arginine; alternate. Arginine 545 carries the post-translational modification Omega-N-methylarginine; alternate. Phosphoserine occurs at positions 572 and 576. An Omega-N-methylarginine modification is found at arginine 578. The segment covering 584–604 (GSDSKSSGWGNSGGSNNSSWW) has biased composition (low complexity). Phosphoserine is present on serine 598.

The protein belongs to the DEAD box helicase family. DDX3/DED1 subfamily. Interacts with the L-A virus GAG protein and the whole L-A virus particles.

It localises to the cytoplasm. The enzyme catalyses ATP + H2O = ADP + phosphate + H(+). Its function is as follows. ATP-binding RNA helicase involved in translation initiation. Remodels RNA in response to ADP and ATP concentrations by facilitating disruption, but also formation of RNA duplexes. Has weak ATP-dependent affinity for dsRNA, but strong ATP-dependent affinity for ssRNA. Acts as a virus host factor involved in the replication of the MBV and the L-A viruses by promoting the negative-strand RNA synthesis. May be involved in recognition of the preinitiation complex and DNA binding of the RNA polymerase III and play a role in mRNA splicing. The polypeptide is ATP-dependent RNA helicase DED1 (Saccharomyces cerevisiae (strain ATCC 204508 / S288c) (Baker's yeast)).